Consider the following 545-residue polypeptide: MTNTNRPIRRALVSVFHKEGIEVLAEAFVKAGTEVVSTGSTAKKLAELGVKVTEVSDVTGFPECLDGRVKTLHPYIHAGILADMTNPEHAKQLEEFGIKPFDLVVVNLYPFADTVRSGANEADTIEKIDIGGPSMVRGAAKNHATVAIVTDPADYALVASRVADGTGFSLDERKWLAAKAFAHTAAYDATINEWTAKHWPKPASLDAVEVDKDDQGTEVDSAKFPAQFTRTWDRAHTLRYGENSHQQAALYIDPLNQTGFAHAEQLGGKPMSYNNYVDADAAWRTVWDMAPAIAVAVVKHNNPCGLAIGATAAEAHKKAHACDPMSAYGGVIACNSKVTLEMAESVRPIFTEVIVAPDYEPAALELLQTKKKNLRILKVAEPPKGHEAIRQIDGGLLVQDTDLINAVGDDPDAWKLVAGEAADADTLKDLVFAWRAIRCVKSNAILLAHDQATVGIGMGQVNRVDSCHLAVERANTLADGADRATGAVAASDAFFPFADGAQVLIDAGVKAIVQPGGSIRDEEVIEAAKKAGVTMYLTGTRHFFH.

Positions methionine 1–threonine 150 constitute an MGS-like domain.

This sequence belongs to the PurH family.

It catalyses the reaction (6R)-10-formyltetrahydrofolate + 5-amino-1-(5-phospho-beta-D-ribosyl)imidazole-4-carboxamide = 5-formamido-1-(5-phospho-D-ribosyl)imidazole-4-carboxamide + (6S)-5,6,7,8-tetrahydrofolate. It carries out the reaction IMP + H2O = 5-formamido-1-(5-phospho-D-ribosyl)imidazole-4-carboxamide. Its pathway is purine metabolism; IMP biosynthesis via de novo pathway; 5-formamido-1-(5-phospho-D-ribosyl)imidazole-4-carboxamide from 5-amino-1-(5-phospho-D-ribosyl)imidazole-4-carboxamide (10-formyl THF route): step 1/1. The protein operates within purine metabolism; IMP biosynthesis via de novo pathway; IMP from 5-formamido-1-(5-phospho-D-ribosyl)imidazole-4-carboxamide: step 1/1. This Bifidobacterium longum (strain DJO10A) protein is Bifunctional purine biosynthesis protein PurH.